A 329-amino-acid chain; its full sequence is Methionyl-tRNA formyltransferase (329 aa).

Position 112–115 (112–115 (SILP)) interacts with (6S)-5,6,7,8-tetrahydrofolate.

This sequence belongs to the Fmt family.

It carries out the reaction L-methionyl-tRNA(fMet) + (6R)-10-formyltetrahydrofolate = N-formyl-L-methionyl-tRNA(fMet) + (6S)-5,6,7,8-tetrahydrofolate + H(+). Attaches a formyl group to the free amino group of methionyl-tRNA(fMet). The formyl group appears to play a dual role in the initiator identity of N-formylmethionyl-tRNA by promoting its recognition by IF2 and preventing the misappropriation of this tRNA by the elongation apparatus. The protein is Methionyl-tRNA formyltransferase of Shewanella sediminis (strain HAW-EB3).